The following is a 154-amino-acid chain: Ribonuclease 8 (154 aa).

The first 27 residues, Met-1 to Ala-27, serve as a signal peptide directing secretion. The active-site Proton acceptor is the His-42. 3 disulfides stabilise this stretch: Cys-64–Cys-118, Cys-82–Cys-133, and Cys-89–Cys-96. Residues Lys-65–Thr-69 and Lys-90 each bind substrate. His-149 serves as the catalytic Proton donor.

Belongs to the pancreatic ribonuclease family.

Its subcellular location is the secreted. Has a low ribonuclease activity. This Miopithecus talapoin (Angolan talapoin) protein is Ribonuclease 8 (RNASE8).